The following is a 119-amino-acid chain: Large ribosomal subunit protein bL20 (119 aa).

Belongs to the bacterial ribosomal protein bL20 family.

In terms of biological role, binds directly to 23S ribosomal RNA and is necessary for the in vitro assembly process of the 50S ribosomal subunit. It is not involved in the protein synthesizing functions of that subunit. This is Large ribosomal subunit protein bL20 from Stenotrophomonas maltophilia (strain R551-3).